The sequence spans 791 residues: Outer membrane protein assembly factor BamA (791 aa).

5 consecutive POTRA domains span residues N59–K130, P131–G209, L212–G298, Y301–R383, and V386–Q459.

It belongs to the BamA family. Part of the Bam complex.

The protein resides in the cell outer membrane. Functionally, part of the outer membrane protein assembly complex, which is involved in assembly and insertion of beta-barrel proteins into the outer membrane. The polypeptide is Outer membrane protein assembly factor BamA (Nitratidesulfovibrio vulgaris (strain ATCC 29579 / DSM 644 / CCUG 34227 / NCIMB 8303 / VKM B-1760 / Hildenborough) (Desulfovibrio vulgaris)).